A 328-amino-acid chain; its full sequence is P2Y purinoceptor 6 (328 aa).

The Extracellular portion of the chain corresponds to 1 to 27; it reads MEWDNGTGQALGLPPTTCVYRENFKQL. Residue asparagine 5 is glycosylated (N-linked (GlcNAc...) asparagine). A helical transmembrane segment spans residues 28–48; that stretch reads LLPPVYSAVLAAGLPLNICVI. Topologically, residues 49–62 are cytoplasmic; it reads TQICTSRRALTRTA. A helical membrane pass occupies residues 63–83; the sequence is VYTLNLALADLLYACSLPLLI. At 84–101 the chain is on the extracellular side; that stretch reads YNYAQGDHWPFGDFACRL. A disulfide bridge connects residues cysteine 99 and cysteine 177. The helical transmembrane segment at 102-122 threads the bilayer; the sequence is VRFLFYANLHGSILFLTCISF. Residues 123 to 144 lie on the Cytoplasmic side of the membrane; sequence QRYLGICHPLAPWHKRGGRRAA. The helical transmembrane segment at 145 to 165 threads the bilayer; the sequence is WLVCVAVWLAVTTQCLPTAIF. The Extracellular portion of the chain corresponds to 166-194; the sequence is AATGIQRNRTVCYDLSPPALATHYMPYGM. The helical transmembrane segment at 195–215 threads the bilayer; the sequence is ALTVIGFLLPFAALLACYCLL. At 216 to 236 the chain is on the cytoplasmic side; that stretch reads ACRLCRQDGPAEPVAQERRGK. The chain crosses the membrane as a helical span at residues 237 to 257; sequence AARMAVVVAAAFAISFLPFHI. At 258 to 280 the chain is on the extracellular side; that stretch reads TKTAYLAVRSTPGVPCTVLEAFA. The helical transmembrane segment at 281-303 threads the bilayer; the sequence is AAYKGTRPFASANSVLDPILFYF. Over 304–328 the chain is Cytoplasmic; sequence TQKKFRRRPHELLQKLTAKWQRQGR.

It belongs to the G-protein coupled receptor 1 family.

The protein resides in the cell membrane. Receptor for extracellular UDP &gt; UTP &gt; ATP. The activity of this receptor is mediated by G proteins which activate a phosphatidylinositol-calcium second messenger system. The protein is P2Y purinoceptor 6 (P2RY6) of Homo sapiens (Human).